The chain runs to 246 residues: MIIPALDLIDGAVVRLHQGDYQTQCHYGADPLPRLQDYLRQGAEVLHLVDLTGARDPQTRQIPLLRRLLAGVAPALVQVGGGIRSAADVEVLLEAGATRVVVGSTAVLQPQEVQRWFERFGPDALVLALDVRIDDDGQRRVAISGWQEDSGATLEQVITQYRPLGLKHVLCTDISRDGTLTGSNVSLYRSLCDAWSDIAFQSSGGIGSLADIAQLRHSGVQGVIVGRSLLENKFTVAEALACWQNA.

The Proton acceptor role is filled by aspartate 7. Catalysis depends on aspartate 130, which acts as the Proton donor.

It belongs to the HisA/HisF family.

Its subcellular location is the cytoplasm. The catalysed reaction is 1-(5-phospho-beta-D-ribosyl)-5-[(5-phospho-beta-D-ribosylamino)methylideneamino]imidazole-4-carboxamide = 5-[(5-phospho-1-deoxy-D-ribulos-1-ylimino)methylamino]-1-(5-phospho-beta-D-ribosyl)imidazole-4-carboxamide. The protein operates within amino-acid biosynthesis; L-histidine biosynthesis; L-histidine from 5-phospho-alpha-D-ribose 1-diphosphate: step 4/9. The protein is 1-(5-phosphoribosyl)-5-[(5-phosphoribosylamino)methylideneamino] imidazole-4-carboxamide isomerase of Sodalis glossinidius (strain morsitans).